The following is a 285-amino-acid chain: Ret finger protein-like 4A (285 aa).

The RING-type; degenerate zinc finger occupies 11–53; that stretch reads CYFCFRYLENPVYLNCGYICCFQCLDSLEKSPEGDGVLCPNCS. The B30.2/SPRY domain maps to 78-276; sequence EPQLNFILTM…ISICPVMNPS (199 aa).

Interacts with PSMB1, UBE2A and CCNB1.

Its subcellular location is the cytoplasm. The protein localises to the nucleus. The sequence is that of Ret finger protein-like 4A (Rfpl4a) from Rattus norvegicus (Rat).